Here is a 263-residue protein sequence, read N- to C-terminus: Protein M1425_2021 (263 aa).

The protein belongs to the CinA family.

This chain is Protein M1425_2021, found in Saccharolobus islandicus (strain M.14.25 / Kamchatka #1) (Sulfolobus islandicus).